A 232-amino-acid chain; its full sequence is Ribonuclease 3 (232 aa).

The RNase III domain occupies 5–134 (KKALLEQFDL…FLGALLLDKG (130 aa)). Position 47 (E47) interacts with Mg(2+). Residue D51 is part of the active site. Mg(2+) contacts are provided by D120 and E123. E123 is a catalytic residue. The 70-residue stretch at 160-229 (DYKTKLQELL…AKNAFEKESS (70 aa)) folds into the DRBM domain. The tract at residues 203–232 (KSGQGQGRSKKLAEQEAAKNAFEKESSSCF) is disordered. Residues 213-232 (KLAEQEAAKNAFEKESSSCF) show a composition bias toward basic and acidic residues.

The protein belongs to the ribonuclease III family. Homodimer. Requires Mg(2+) as cofactor.

It localises to the cytoplasm. The catalysed reaction is Endonucleolytic cleavage to 5'-phosphomonoester.. Its function is as follows. Digests double-stranded RNA. Involved in the processing of primary rRNA transcript to yield the immediate precursors to the large and small rRNAs (23S and 16S). Processes some mRNAs, and tRNAs when they are encoded in the rRNA operon. Processes pre-crRNA and tracrRNA of type II CRISPR loci if present in the organism. The chain is Ribonuclease 3 from Streptococcus sanguinis (strain SK36).